We begin with the raw amino-acid sequence, 338 residues long: Lipoyl synthase (338 aa).

Positions 1–24 (MTTVQEAVPNLIPTQDATPRPAPK) are disordered. 7 residues coordinate [4Fe-4S] cluster: C84, C89, C95, C110, C114, C117, and S324. The Radical SAM core domain occupies 96–313 (FSGGTATFMI…AEEGYKMGFK (218 aa)).

The protein belongs to the radical SAM superfamily. Lipoyl synthase family. [4Fe-4S] cluster is required as a cofactor.

The protein resides in the cytoplasm. It carries out the reaction [[Fe-S] cluster scaffold protein carrying a second [4Fe-4S](2+) cluster] + N(6)-octanoyl-L-lysyl-[protein] + 2 oxidized [2Fe-2S]-[ferredoxin] + 2 S-adenosyl-L-methionine + 4 H(+) = [[Fe-S] cluster scaffold protein] + N(6)-[(R)-dihydrolipoyl]-L-lysyl-[protein] + 4 Fe(3+) + 2 hydrogen sulfide + 2 5'-deoxyadenosine + 2 L-methionine + 2 reduced [2Fe-2S]-[ferredoxin]. It functions in the pathway protein modification; protein lipoylation via endogenous pathway; protein N(6)-(lipoyl)lysine from octanoyl-[acyl-carrier-protein]: step 2/2. Functionally, catalyzes the radical-mediated insertion of two sulfur atoms into the C-6 and C-8 positions of the octanoyl moiety bound to the lipoyl domains of lipoate-dependent enzymes, thereby converting the octanoylated domains into lipoylated derivatives. In Pseudomonas putida (strain ATCC 700007 / DSM 6899 / JCM 31910 / BCRC 17059 / LMG 24140 / F1), this protein is Lipoyl synthase.